Consider the following 388-residue polypeptide: Succinate--CoA ligase [ADP-forming] subunit beta (388 aa).

The ATP-grasp domain occupies 9–244; that stretch reads KQLFARYGLP…PSQEDPREAQ (236 aa). Residues Lys-46, 53 to 55, Glu-99, Thr-102, and Glu-107 contribute to the ATP site; that span reads GRG. Mg(2+) contacts are provided by Asn-199 and Asp-213. Substrate is bound by residues Asn-264 and 321–323; that span reads GIV.

Belongs to the succinate/malate CoA ligase beta subunit family. As to quaternary structure, heterotetramer of two alpha and two beta subunits. Requires Mg(2+) as cofactor.

The enzyme catalyses succinate + ATP + CoA = succinyl-CoA + ADP + phosphate. The catalysed reaction is GTP + succinate + CoA = succinyl-CoA + GDP + phosphate. The protein operates within carbohydrate metabolism; tricarboxylic acid cycle; succinate from succinyl-CoA (ligase route): step 1/1. Its function is as follows. Succinyl-CoA synthetase functions in the citric acid cycle (TCA), coupling the hydrolysis of succinyl-CoA to the synthesis of either ATP or GTP and thus represents the only step of substrate-level phosphorylation in the TCA. The beta subunit provides nucleotide specificity of the enzyme and binds the substrate succinate, while the binding sites for coenzyme A and phosphate are found in the alpha subunit. The polypeptide is Succinate--CoA ligase [ADP-forming] subunit beta (Photorhabdus laumondii subsp. laumondii (strain DSM 15139 / CIP 105565 / TT01) (Photorhabdus luminescens subsp. laumondii)).